Consider the following 480-residue polypeptide: 6-phosphogluconate dehydrogenase, decarboxylating 1 (480 aa).

NADP(+) contacts are provided by residues 10–15 (GLAVMG), 33–35 (NRT), 77–79 (VKA), and Asn-105. Residues Asn-105 and 131 to 133 (SGG) contribute to the substrate site. The active-site Proton acceptor is the Lys-186. 189-190 (HN) contributes to the substrate binding site. The Proton donor role is filled by Glu-193. Substrate-binding residues include Tyr-194, Lys-264, Arg-291, Arg-450, and His-456.

The protein belongs to the 6-phosphogluconate dehydrogenase family. In terms of assembly, homodimer. Highly expressed in inflorescence, lowly expressed in root and embryos and almost absent in leaves.

The protein localises to the cytoplasm. It catalyses the reaction 6-phospho-D-gluconate + NADP(+) = D-ribulose 5-phosphate + CO2 + NADPH. It functions in the pathway carbohydrate degradation; pentose phosphate pathway; D-ribulose 5-phosphate from D-glucose 6-phosphate (oxidative stage): step 3/3. Its function is as follows. Catalyzes the oxidative decarboxylation of 6-phosphogluconate to ribulose 5-phosphate and CO(2), with concomitant reduction of NADP to NADPH. This Oryza sativa subsp. japonica (Rice) protein is 6-phosphogluconate dehydrogenase, decarboxylating 1 (G6PGH1).